The following is a 339-amino-acid chain: tRNA dimethylallyltransferase (339 aa).

Residue 33-40 (GPTASGKT) participates in ATP binding. A substrate-binding site is contributed by 35–40 (TASGKT). 2 interaction with substrate tRNA regions span residues 58 to 61 (DSLL) and 182 to 186 (QRIQR).

This sequence belongs to the IPP transferase family. Monomer. It depends on Mg(2+) as a cofactor.

It carries out the reaction adenosine(37) in tRNA + dimethylallyl diphosphate = N(6)-dimethylallyladenosine(37) in tRNA + diphosphate. Its function is as follows. Catalyzes the transfer of a dimethylallyl group onto the adenine at position 37 in tRNAs that read codons beginning with uridine, leading to the formation of N6-(dimethylallyl)adenosine (i(6)A). The protein is tRNA dimethylallyltransferase of Acidithiobacillus ferrooxidans (strain ATCC 23270 / DSM 14882 / CIP 104768 / NCIMB 8455) (Ferrobacillus ferrooxidans (strain ATCC 23270)).